We begin with the raw amino-acid sequence, 1533 residues long: Actin cytoskeleton-regulatory complex protein pan-1 (1533 aa).

The disordered stretch occupies residues 1–204 (MYSNSNAFLG…PPPPVKPQAT (204 aa)). Composition is skewed to low complexity over residues 19–46 (QQPQ…QPTG), 53–136 (GFAP…FQTG), 143–170 (IPQQ…QPQP), and 177–193 (QIQA…QGGI). The region spanning 244–333 (DQARFETLFK…DHIKNEVSSM (90 aa)) is the EH 1 domain. The EF-hand 1 domain occupies 277 to 312 (LDGDSLSQIWTLADTTRSGQLHFPEFALAMYLCNLK). Over residues 345–359 (AGSSSAPASNAPSFA) the composition is skewed to low complexity. Disordered stretches follow at residues 345-378 (AGSS…PQPS) and 393-423 (QQTG…GYAG). Polar residues-rich tracts occupy residues 360-378 (TQQN…PQPS) and 393-410 (QQTG…QQTG). One can recognise an EH 2 domain in the interval 513–602 (EKTRYDALFR…PELVPPSARN (90 aa)). The 36-residue stretch at 546–581 (LDKPDLERIWTLADNGNKGRLDLDEFAVAMHLIYRK) folds into the EF-hand 2 domain. Residues 649-664 (NRKDATVFKNNDEEVG) are compositionally biased toward basic and acidic residues. Disordered stretches follow at residues 649 to 691 (NRKD…GDDL), 894 to 917 (IEDS…WEDA), 935 to 1306 (SRAA…STNP), and 1334 to 1533 (DAIS…RVLD). Residues 690 to 890 (DLTIEQLRKK…RDVEDSVREF (201 aa)) adopt a coiled-coil conformation. 2 stretches are compositionally biased toward basic and acidic residues: residues 894-916 (IEDS…RWED) and 935-947 (SRAA…DRQG). A compositionally biased stretch (low complexity) spans 968-982 (TPSPSISRTSTPAST). Residues 1026-1209 (ETAAQRAERE…KQLEAIDDED (184 aa)) are a coiled coil. 3 stretches are compositionally biased toward basic and acidic residues: residues 1031 to 1063 (RAER…KLAE), 1090 to 1164 (GKAD…EEEK), and 1173 to 1203 (EAKE…KQLE). Positions 1204 to 1218 (AIDDEDSSSSDEEGP) are enriched in acidic residues. Over residues 1221–1237 (ITPQASTPTVGGSQVGT) the composition is skewed to polar residues. Residues 1279 to 1293 (SQSSEASTSSVAAPV) are compositionally biased toward low complexity. The span at 1348–1367 (DDDDDDWGSEKGSDDEDSDD) shows a compositional bias: acidic residues. Positions 1412–1495 (SSPPPPPAPV…PPPGGAPAPS (84 aa)) are enriched in pro residues. The 18-residue stretch at 1500-1517 (RPAGLLGEIQAGRALKKT) folds into the WH2 domain.

This sequence belongs to the PAN1 family. Component of the PAN1 actin cytoskeleton-regulatory complex.

The protein localises to the cell membrane. It is found in the endosome membrane. The protein resides in the cytoplasm. Its subcellular location is the cytoskeleton. It localises to the actin patch. Its function is as follows. Component of the PAN1 actin cytoskeleton-regulatory complex required for the internalization of endosomes during actin-coupled endocytosis. The complex links the site of endocytosis to the cell membrane-associated actin cytoskeleton. Mediates uptake of external molecules and vacuolar degradation of plasma membrane proteins. Plays a role in the proper organization of the cell membrane-associated actin cytoskeleton and promotes its destabilization. This chain is Actin cytoskeleton-regulatory complex protein pan-1 (pan-1), found in Neurospora crassa (strain ATCC 24698 / 74-OR23-1A / CBS 708.71 / DSM 1257 / FGSC 987).